The sequence spans 465 residues: Deoxyguanosinetriphosphate triphosphohydrolase-like protein (465 aa).

Residues M1–N22 form a disordered region. The 190-residue stretch at R63–L252 folds into the HD domain.

The protein belongs to the dGTPase family. Type 3 subfamily.

This is Deoxyguanosinetriphosphate triphosphohydrolase-like protein from Listeria monocytogenes serovar 1/2a (strain ATCC BAA-679 / EGD-e).